Reading from the N-terminus, the 85-residue chain is uncharacterized protein (85 aa).

Residues 35 to 85 (SDKDAPFSTQALTRSKSKRKRSALPVANGLKKPTRSIKRPSRGERLSATTI) are disordered.

This is an uncharacterized protein from Pasteurella multocida (strain Pm70).